The primary structure comprises 395 residues: Acid ceramidase (395 aa).

A signal peptide spans 1 to 21; the sequence is MPGRSRVALVLLAAAVSCAVA. Cys-31 and Cys-340 are disulfide-bonded. The Nucleophile role is filled by Cys-143. Residues Asn-195, Asn-259, Asn-286, and Asn-342 are each glycosylated (N-linked (GlcNAc...) asparagine). Cys-388 and Cys-392 are oxidised to a cystine.

It belongs to the acid ceramidase family. As to quaternary structure, heterodimer; disulfide-linked. The heterodimer is composed of the disulfide-linked alpha and beta chains produced by autocatalytic cleavage of the precursor. In terms of processing, N-glycosylated. Post-translationally, proteolytically cleaved into two chains alpha and beta that remain associated via a disulfide bond. Cleavage gives rise to a conformation change that activates the enzyme. The same catalytic Cys residue mediates the autoproteolytic cleavage and subsequent hydrolysis of lipid substrates. The beta chain may undergo an additional C-terminal processing.

The protein localises to the lysosome. The protein resides in the secreted. It catalyses the reaction an N-acylsphing-4-enine + H2O = sphing-4-enine + a fatty acid. It carries out the reaction N-dodecanoylsphing-4-enine + H2O = dodecanoate + sphing-4-enine. The catalysed reaction is N-tetradecanoylsphing-4-enine + H2O = tetradecanoate + sphing-4-enine. The enzyme catalyses N-hexadecanoylsphing-4-enine + H2O = sphing-4-enine + hexadecanoate. It catalyses the reaction N-octadecanoylsphing-4-enine + H2O = sphing-4-enine + octadecanoate. It carries out the reaction N-dodecanoyl-(4R)-hydroxysphinganine + H2O = (4R)-hydroxysphinganine + dodecanoate. The catalysed reaction is N-(dodecanoyl)-sphinganine + H2O = dodecanoate + sphinganine. The enzyme catalyses N-(acetyl)-sphing-4-enine + H2O = sphing-4-enine + acetate. It catalyses the reaction N-(hexanoyl)sphing-4-enine + H2O = hexanoate + sphing-4-enine. It carries out the reaction N-octanoylsphing-4-enine + H2O = octanoate + sphing-4-enine. The catalysed reaction is N-(9Z-octadecenoyl)-sphing-4-enine + H2O = sphing-4-enine + (9Z)-octadecenoate. The enzyme catalyses N-dodecanoylethanolamine + H2O = dodecanoate + ethanolamine. The protein operates within lipid metabolism; sphingolipid metabolism. Functionally, lysosomal ceramidase that hydrolyzes sphingolipid ceramides into sphingosine and free fatty acids at acidic pH. Ceramides, sphingosine, and its phosphorylated form sphingosine-1-phosphate are bioactive lipids that mediate cellular signaling pathways regulating several biological processes including cell proliferation, apoptosis and differentiation. Has a higher catalytic efficiency towards C12-ceramides versus other ceramides. Also catalyzes the reverse reaction allowing the synthesis of ceramides from fatty acids and sphingosine. For the reverse synthetic reaction, the natural sphingosine D-erythro isomer is more efficiently utilized as a substrate compared to D-erythro-dihydrosphingosine and D-erythro-phytosphingosine, while the fatty acids with chain lengths of 12 or 14 carbons are the most efficiently used. Also has an N-acylethanolamine hydrolase activity. By regulating the levels of ceramides, sphingosine and sphingosine-1-phosphate in the epidermis, mediates the calcium-induced differentiation of epidermal keratinocytes. Also indirectly regulates tumor necrosis factor/TNF-induced apoptosis. By regulating the intracellular balance between ceramides and sphingosine, in adrenocortical cells, probably also acts as a regulator of steroidogenesis. The sequence is that of Acid ceramidase from Pan troglodytes (Chimpanzee).